A 216-amino-acid chain; its full sequence is Cytidylate kinase (216 aa).

7-15 (GPAASGKGT) serves as a coordination point for ATP.

It belongs to the cytidylate kinase family. Type 1 subfamily.

It is found in the cytoplasm. The catalysed reaction is CMP + ATP = CDP + ADP. The enzyme catalyses dCMP + ATP = dCDP + ADP. The sequence is that of Cytidylate kinase from Methylocella silvestris (strain DSM 15510 / CIP 108128 / LMG 27833 / NCIMB 13906 / BL2).